Here is a 521-residue protein sequence, read N- to C-terminus: AAA ATPase forming ring-shaped complexes (521 aa).

A coiled-coil region spans residues 4–44 (TEDLAALNDRLMAKNHALAEALSRAGKELTKAKSQLAQLAQ). 235 to 240 (GNGKTM) serves as a coordination point for ATP.

It belongs to the AAA ATPase family. In terms of assembly, homohexamer. Assembles into a hexameric ring structure.

The sequence is that of AAA ATPase forming ring-shaped complexes from Bifidobacterium longum (strain DJO10A).